We begin with the raw amino-acid sequence, 138 residues long: ATP synthase epsilon chain 1 (138 aa).

It belongs to the ATPase epsilon chain family. F-type ATPases have 2 components, CF(1) - the catalytic core - and CF(0) - the membrane proton channel. CF(1) has five subunits: alpha(3), beta(3), gamma(1), delta(1), epsilon(1). CF(0) has three main subunits: a, b and c.

Its subcellular location is the cell inner membrane. In terms of biological role, produces ATP from ADP in the presence of a proton gradient across the membrane. In Syntrophotalea carbinolica (strain DSM 2380 / NBRC 103641 / GraBd1) (Pelobacter carbinolicus), this protein is ATP synthase epsilon chain 1.